We begin with the raw amino-acid sequence, 464 residues long: Argininosuccinate lyase (464 aa).

This sequence belongs to the lyase 1 family. Argininosuccinate lyase subfamily.

The protein resides in the cytoplasm. The enzyme catalyses 2-(N(omega)-L-arginino)succinate = fumarate + L-arginine. It functions in the pathway amino-acid biosynthesis; L-arginine biosynthesis; L-arginine from L-ornithine and carbamoyl phosphate: step 3/3. The polypeptide is Argininosuccinate lyase (Sulfurovum sp. (strain NBC37-1)).